The primary structure comprises 37 residues: Cytochrome b6-f complex subunit 5 (37 aa).

The helical transmembrane segment at Leu5–Ala25 threads the bilayer.

The protein belongs to the PetG family. As to quaternary structure, the 4 large subunits of the cytochrome b6-f complex are cytochrome b6, subunit IV (17 kDa polypeptide, PetD), cytochrome f and the Rieske protein, while the 4 small subunits are PetG, PetL, PetM and PetN. The complex functions as a dimer.

Its subcellular location is the cellular thylakoid membrane. In terms of biological role, component of the cytochrome b6-f complex, which mediates electron transfer between photosystem II (PSII) and photosystem I (PSI), cyclic electron flow around PSI, and state transitions. PetG is required for either the stability or assembly of the cytochrome b6-f complex. The chain is Cytochrome b6-f complex subunit 5 from Synechococcus sp. (strain WH7803).